We begin with the raw amino-acid sequence, 307 residues long: Dihydroorotate dehydrogenase A (fumarate) (307 aa).

Residues S21 and 46 to 47 (KT) contribute to the FMN site. Substrate-binding positions include K46, 70–74 (NSVGL), and N130. FMN is bound at residue N130. The active-site Nucleophile is the C133. Positions 168 and 194 each coordinate FMN. Residue 195–196 (NT) coordinates substrate. FMN is bound by residues G220, 246–247 (GG), and 268–269 (GS).

It belongs to the dihydroorotate dehydrogenase family. Type 1 subfamily. As to quaternary structure, homodimer. The cofactor is FMN.

The protein localises to the cytoplasm. The enzyme catalyses (S)-dihydroorotate + fumarate = orotate + succinate. It functions in the pathway pyrimidine metabolism; UMP biosynthesis via de novo pathway. Functionally, catalyzes the conversion of dihydroorotate to orotate with fumarate as the electron acceptor. In Lactobacillus delbrueckii subsp. bulgaricus (strain ATCC BAA-365 / Lb-18), this protein is Dihydroorotate dehydrogenase A (fumarate) (pyrD).